A 360-amino-acid chain; its full sequence is Nucleoporin SEH1 (360 aa).

WD repeat units lie at residues 10-49 (DHKDLIHDVSFDFHGRRMATCSSDQSVKVWDKSESGDWHC), 55-96 (THSG…SNDK), 111-152 (DSRT…NLSQ), 160-210 (SCKL…RKYA), 217-258 (TVTD…KELT), and 276-315 (NHNSQVWRVSWNITGTVLASSGDDGCVRLWKANYMDNWKC). Residue Lys12 forms a Glycyl lysine isopeptide (Lys-Gly) (interchain with G-Cter in SUMO2) linkage. Residues Ser179 and Ser190 each carry the phosphoserine modification. The span at 324–354 (SPVNGSSQQGTSNPSLGSNIPSLQNSLNGSS) shows a compositional bias: polar residues. Residues 324–360 (SPVNGSSQQGTSNPSLGSNIPSLQNSLNGSSAGRKHS) are disordered.

This sequence belongs to the WD repeat SEC13 family. Component of the Nup107-160 subcomplex of the nuclear pore complex (NPC). The Nup107-160 subcomplex includes NUP160, NUP133, NUP107, NUP98, NUP85, NUP43, NUP37, SEH1 and SEC13. The SEH1 subunit appears to be only weakly associated with the Nup107-160 subcomplex. Component of the GATOR2 subcomplex, composed of MIOS, SEC13, SEH1L, WDR24 and WDR59. The GATOR2 complex interacts with CASTOR1 and CASTOR2; the interaction is negatively regulated by arginine. The GATOR2 complex interacts with SESN1, SESN2 and SESN3; the interaction is negatively regulated by amino acids. SESN1, SESN2 and SESN3 convey leucine availability via direct interaction with SEH1L and WDR24.

It localises to the chromosome. Its subcellular location is the centromere. It is found in the kinetochore. The protein resides in the nucleus. The protein localises to the nuclear pore complex. It localises to the lysosome membrane. The GATOR2 complex is negatively regulated by the upstream amino acid sensors CASTOR1 and SESN2, which sequester the GATOR2 complex in absence of amino acids. In the presence of abundant amino acids, GATOR2 is released from CASTOR1 and SESN2 and activated. Component of the Nup107-160 subcomplex of the nuclear pore complex (NPC). The Nup107-160 subcomplex is required for the assembly of a functional NPC. The Nup107-160 subcomplex is also required for normal kinetochore microtubule attachment, mitotic progression and chromosome segregation. This subunit plays a role in recruitment of the Nup107-160 subcomplex to the kinetochore. In terms of biological role, as a component of the GATOR2 complex, functions as an activator of the amino acid-sensing branch of the mTORC1 signaling pathway. The GATOR2 complex indirectly activates mTORC1 through the inhibition of the GATOR1 subcomplex. GATOR2 probably acts as an E3 ubiquitin-protein ligase toward GATOR1. In the presence of abundant amino acids, the GATOR2 complex mediates ubiquitination of the NPRL2 core component of the GATOR1 complex, leading to GATOR1 inactivation. In the absence of amino acids, GATOR2 is inhibited, activating the GATOR1 complex. Within the GATOR2 complex, SEC13 and SEH1L are required to stabilize the complex. In Pongo abelii (Sumatran orangutan), this protein is Nucleoporin SEH1 (SEH1L).